The chain runs to 147 residues: Shadow of prion protein (147 aa).

A signal peptide spans 1–24 (MNWTTATCWALLLATAFLCDSCSA). The segment covering 26–43 (GGRGGARGSARGVRGGAR) has biased composition (gly residues). Residues 26–46 (GGRGGARGSARGVRGGARGAS) are disordered. The N-linked (GlcNAc...) asparagine glycan is linked to Asn107. Gly122 is lipidated: GPI-anchor amidated glycine. Residues 123–147 (SGSVHSPRICLLLSGTLGALELLRP) constitute a propeptide, removed in mature form.

The protein belongs to the SPRN family. In terms of processing, N-glycosylated. In terms of tissue distribution, almost exclusively expressed in brain, with weak expression in lung and stomach.

It is found in the cell membrane. Prion-like protein that has PrP(C)-like neuroprotective activity. May act as a modulator for the biological actions of normal and abnormal PrP. The polypeptide is Shadow of prion protein (Sprn) (Rattus norvegicus (Rat)).